The sequence spans 296 residues: Fructose-bisphosphate aldolase class 1 (296 aa).

The Proton acceptor role is filled by E175. K212 (schiff-base intermediate with dihydroxyacetone-P) is an active-site residue.

This sequence belongs to the class I fructose-bisphosphate aldolase family.

The catalysed reaction is beta-D-fructose 1,6-bisphosphate = D-glyceraldehyde 3-phosphate + dihydroxyacetone phosphate. Its pathway is carbohydrate degradation; glycolysis; D-glyceraldehyde 3-phosphate and glycerone phosphate from D-glucose: step 4/4. The sequence is that of Fructose-bisphosphate aldolase class 1 from Staphylococcus aureus (strain MSSA476).